The chain runs to 367 residues: Glutamate 5-kinase (367 aa).

K10 serves as a coordination point for ATP. 3 residues coordinate substrate: S50, D137, and N149. ATP-binding positions include 169–170 and 211–217; these read TD and TGGMATK. The 79-residue stretch at 275 to 353 folds into the PUA domain; sequence AGEITVDDGA…QQISEILGYE (79 aa).

It belongs to the glutamate 5-kinase family.

Its subcellular location is the cytoplasm. The catalysed reaction is L-glutamate + ATP = L-glutamyl 5-phosphate + ADP. The protein operates within amino-acid biosynthesis; L-proline biosynthesis; L-glutamate 5-semialdehyde from L-glutamate: step 1/2. In terms of biological role, catalyzes the transfer of a phosphate group to glutamate to form L-glutamate 5-phosphate. This Yersinia pseudotuberculosis serotype IB (strain PB1/+) protein is Glutamate 5-kinase.